We begin with the raw amino-acid sequence, 462 residues long: MQLLNIYNTLAREKQPFVPIEPGKVRMYVCGMTVYDYCHVGHARVMVVFDMVHRWLRAAGYDVTFVQNITDIDDKIIRRAAENGETIGQLTTRFIQYMHEDADALGIVRPDHEPRATDYVPQMLDLIGKLEANGLAYQATDGDVNYSVRKFDGYGKLSGKSLEDLRAGERVTANDAKQDPLDFVLWKSAKESEPPESKWNSKWGMGRPGWHIECSAMSCTLLGEHFDIHGGGADLQFPHHENEIAQSEGASGKPFVNVWMHNGFVRVNDEKMSKSLGNFFTIREVLKEYDAEVVRFFILRAHYRSPLNYSDAHLDDARHALTRLYTALKDTQPGGYAVDWEEAHAKRFAEAMCDDFNTPIAVSVLFDLASEVNRTGSSVAARQLKGLAGTLGLLERDPHTFLQGGKKVDGPSPDEIEGLIAARKTAKAERNFAEADRIRADLLAAGIVLEDKPGGATEWRRA.

Cysteine 30 is a binding site for Zn(2+). Residues methionine 32 to histidine 42 carry the 'HIGH' region motif. The Zn(2+) site is built by cysteine 214, histidine 239, and glutamate 243. Positions lysine 271–serine 275 match the 'KMSKS' region motif. Position 274 (lysine 274) interacts with ATP.

It belongs to the class-I aminoacyl-tRNA synthetase family. Monomer. Zn(2+) is required as a cofactor.

Its subcellular location is the cytoplasm. It catalyses the reaction tRNA(Cys) + L-cysteine + ATP = L-cysteinyl-tRNA(Cys) + AMP + diphosphate. This Cupriavidus pinatubonensis (strain JMP 134 / LMG 1197) (Cupriavidus necator (strain JMP 134)) protein is Cysteine--tRNA ligase.